Here is a 300-residue protein sequence, read N- to C-terminus: F-box associated domain-containing protein sdz-33 (300 aa).

An F-box domain is found at 5–51 (PFPILCLPDFVLQKSLKLMGVVEHLCLSILSKNIKQLIATLKGYPKC).

Expressed in D-type motor neuron cell bodies.

In terms of biological role, substrate recognition component of E3 ubiquitin-protein ligase complex which mediates the ubiquitination and subsequent proteasomal degradation of target proteins such as mdl-1. Positively regulates axon regeneration by targeting mdl-1 for ubiquitin-mediated degradation; probably thereby reducing levels of mdl-1-mxl-1 heterodimers, allowing free mxl-1 to form complexes with tdpt-1 and thus inhibiting tdpt-1-dependent sumoylation of ets-4. The chain is F-box associated domain-containing protein sdz-33 from Caenorhabditis elegans.